The sequence spans 351 residues: Rhodopsin (351 aa).

At 1–36 (MNGTEGQDFYVPMSNKTGVVRSPFEYPQYYLAEPWK) the chain is on the extracellular side. N-linked (GlcNAc...) asparagine glycans are attached at residues Asn2 and Asn15. Residues 37-61 (FSALAAYMFMLILLGFPVNFLTLYV) form a helical membrane-spanning segment. Residues 62–73 (TIQHKKLRTPLN) are Cytoplasmic-facing. The helical transmembrane segment at 74–96 (YILLNLVVADLFMVFGGFTTTMY) threads the bilayer. The Extracellular segment spans residues 97–110 (TSMNGYFVFGVTGC). An intrachain disulfide couples Cys110 to Cys187. Residues 111 to 133 (YIEGFFATLGGEIALWSLVVLAV) form a helical membrane-spanning segment. Residues 134 to 136 (ERY) carry the 'Ionic lock' involved in activated form stabilization motif. Residues 134–152 (ERYVVVCKPMSNFRFGENH) are Cytoplasmic-facing. The helical transmembrane segment at 153 to 173 (AIMGVAFSWIMAMACAAPPLF) threads the bilayer. Residues 174–202 (GWSRYIPEGMQCSCGIDYYTLKPEINNES) are Extracellular-facing. The chain crosses the membrane as a helical span at residues 203-224 (FVIYMFVVHFMIPLAVIFFCYG). Over 225–252 (NLVCTVKEAAAQQQESATTQKAEKEVTR) the chain is Cytoplasmic. The helical transmembrane segment at 253-274 (MVIIMVIAFLICWVPYASVAFY) threads the bilayer. Over 275-286 (IFTNQGSDFGPI) the chain is Extracellular. A helical membrane pass occupies residues 287-308 (FMTIPAFFAKSSAIYNPVIYIV). Lys296 bears the N6-(retinylidene)lysine mark. Topologically, residues 309–351 (MNKQFRNCMITTLCCGKNPLGDEDTSAGKTETSSVSTSQVSPA) are cytoplasmic. S-palmitoyl cysteine attachment occurs at residues Cys322 and Cys323. The segment at 331–351 (EDTSAGKTETSSVSTSQVSPA) is disordered. The span at 340–351 (TSSVSTSQVSPA) shows a compositional bias: low complexity. A Phosphoserine; by RK and GRK7 modification is found at Ser341.

The protein belongs to the G-protein coupled receptor 1 family. Opsin subfamily. Contains one covalently linked retinal chromophore. Upon light absorption, the covalently bound 11-cis-retinal is converted to all-trans-retinal. After hydrolysis of the Schiff base and release of the covalently bound all-trans-retinal, active rhodopsin is regenerated by binding of a fresh molecule of 11-cis-retinal.

It localises to the membrane. Its subcellular location is the cell projection. It is found in the cilium. The protein resides in the photoreceptor outer segment. Functionally, photoreceptor required for image-forming vision at low light intensity. Required for photoreceptor cell viability after birth. Light-induced isomerization of 11-cis to all-trans retinal triggers a conformational change that activates signaling via G-proteins. Subsequent receptor phosphorylation mediates displacement of the bound G-protein alpha subunit by arrestin and terminates signaling. This Gallus gallus (Chicken) protein is Rhodopsin (RHO).